Reading from the N-terminus, the 1008-residue chain is Serine/threonine-protein kinase PRP4 homolog (1008 aa).

Residues 1 to 103 form a disordered region; the sequence is MAAAEAPSLR…PAKRTKLDDL (103 aa). The residue at position 2 (alanine 2) is an N-acetylalanine. Residues serine 8, serine 20, serine 23, and serine 32 each carry the phosphoserine modification. Composition is skewed to basic residues over residues 39-59 and 67-81; these read KHSR…KHKH and RKHK…HKRK. Positions 82-91 are enriched in basic and acidic residues; it reads EVADASDKEG. Phosphoserine is present on residues serine 87 and serine 93. Lysine 99 bears the N6-acetyllysine; alternate mark. Lysine 99 participates in a covalent cross-link: Glycyl lysine isopeptide (Lys-Gly) (interchain with G-Cter in SUMO2); alternate. Residue lysine 111 forms a Glycyl lysine isopeptide (Lys-Gly) (interchain with G-Cter in SUMO2) linkage. Lysine 117 participates in a covalent cross-link: Glycyl lysine isopeptide (Lys-Gly) (interchain with G-Cter in SUMO2); alternate. Lysine 117 is covalently cross-linked (Glycyl lysine isopeptide (Lys-Gly) (interchain with G-Cter in SUMO1); alternate). Phosphoserine is present on serine 131. Tyrosine 140 bears the Phosphotyrosine mark. 2 disordered regions span residues 140-536 and 560-584; these read YESG…EDEE and SNLS…SPDD. A phosphoserine mark is found at serine 142, serine 144, and serine 166. Residues 157–168 show a composition bias toward low complexity; that stretch reads GNRSSTRSSSTK. Glycyl lysine isopeptide (Lys-Gly) (interchain with G-Cter in SUMO2) cross-links involve residues lysine 170 and lysine 177. Composition is skewed to basic residues over residues 179–202 and 214–230; these read STKK…KKSK and RSKS…SKRS. A phosphoserine mark is found at serine 239, serine 241, serine 257, serine 277, serine 283, serine 292, and serine 294. The span at 247 to 270 shows a compositional bias: basic and acidic residues; it reads RSQEKVGKARSPVDDKAKVEDKSK. Basic residues predominate over residues 302 to 315; sequence SKDRRSRSKERKSK. The span at 316–325 shows a compositional bias: basic and acidic residues; the sequence is RPEADKEKKP. Residues serine 328, serine 354, serine 356, serine 366, and serine 368 each carry the phosphoserine modification. A compositionally biased stretch (basic residues) spans 342–367; sequence PSRRPGRSPKRRSLSPKQRDKSRRSR. At threonine 385 the chain carries Phosphothreonine. Serine 387 is modified (phosphoserine). Basic and acidic residues-rich tracts occupy residues 395-408 and 415-429; these read RSLE…ERRR and RPRD…RSKD. Phosphoserine occurs at positions 427, 431, and 437. The segment covering 438–498 has biased composition (basic residues); sequence PARRRASRSP…RGGRRRRSRS (61 aa). Residues serine 519, serine 520, serine 521, serine 566, serine 570, serine 577, serine 579, and serine 581 each carry the phosphoserine modification. Over residues 519–536 the composition is skewed to acidic residues; sequence SSSDDNLEDFDVEEEDEE. A compositionally biased stretch (low complexity) spans 563 to 582; sequence SVPSEPSSPQSSTRSRSPSP. Residues lysine 594 and lysine 660 each participate in a glycyl lysine isopeptide (Lys-Gly) (interchain with G-Cter in SUMO2) cross-link. The Protein kinase domain occupies 688-1004; that stretch reads YNVYGYTGQG…INQALQHAFI (317 aa). ATP contacts are provided by residues 694 to 702 and lysine 718; that span reads TGQGVFSNV. An N6-acetyllysine modification is found at lysine 718. Catalysis depends on aspartate 816, which acts as the Proton acceptor. Tyrosine 850 bears the Phosphotyrosine mark. Serine 853 carries the post-translational modification Phosphoserine.

The protein belongs to the protein kinase superfamily. CMGC Ser/Thr protein kinase family. As to quaternary structure, interacts with CLK1 C-terminus. Associates with the U5 snRNP and NCOR1 deacetylase complexes. Identified in the spliceosome C complex. Post-translationally, phosphorylated by CLK1. Autophosphorylated; phosphorylation inhibits interaction with its targets, such as PRPF6 or SMARCA4.

It localises to the nucleus. The protein localises to the chromosome. Its subcellular location is the centromere. It is found in the kinetochore. The enzyme catalyses L-seryl-[protein] + ATP = O-phospho-L-seryl-[protein] + ADP + H(+). It catalyses the reaction L-threonyl-[protein] + ATP = O-phospho-L-threonyl-[protein] + ADP + H(+). Serine/threonine kinase involved in spliceosomal assembly as well as mitosis and signaling regulation. Connects chromatin mediated regulation of transcription and pre-mRNA splicing. During spliceosomal assembly, interacts with and phosphorylates PRPF6 and PRPF31, components of the U4/U6-U5 tri-small nuclear ribonucleoprotein (snRNP), to facilitate the formation of the spliceosome B complex. Plays a role in regulating transcription and the spindle assembly checkpoint (SAC). Associates with U5 snRNP and NCOR1 deacetylase complexes which may allow a coordination of pre-mRNA splicing with chromatin remodeling events involved in transcriptional regulation. Associates and probably phosphorylates SMARCA4 and NCOR1. Phosphorylates SRSF1. Associates with kinetochores during mitosis and is necessary for recruitment and maintenance of the checkpoint proteins such as MAD1L1 and MAD12L1 at the kinetochores. Phosphorylates and regulates the activity of the transcription factors such as ELK1 and KLF13. Phosphorylates nuclear YAP1 and WWTR1/TAZ which induces nuclear exclusion and regulates Hippo signaling pathway, involved in tissue growth control. This is Serine/threonine-protein kinase PRP4 homolog (PRP4K) from Bos taurus (Bovine).